The sequence spans 559 residues: Potassium-transporting ATPase potassium-binding subunit (559 aa).

13 helical membrane passes run 5–25, 27–47, 63–83, 132–152, 170–190, 253–273, 283–303, 327–347, 356–376, 379–399, 416–436, 484–504, and 524–544; these read GFLL…PLGS, LARL…RILW, LLAL…LLFW, GLTV…FALI, LVRI…LFFI, LAQM…FGEA, LLWA…WAEV, FGVL…CGAV, ALGG…FGGV, GLYG…LMIG, MTAL…ALAM, LLAF…MAIA, and GALF…LTFI.

The protein belongs to the KdpA family. As to quaternary structure, the system is composed of three essential subunits: KdpA, KdpB and KdpC.

It is found in the cell inner membrane. Part of the high-affinity ATP-driven potassium transport (or Kdp) system, which catalyzes the hydrolysis of ATP coupled with the electrogenic transport of potassium into the cytoplasm. This subunit binds the periplasmic potassium ions and delivers the ions to the membrane domain of KdpB through an intramembrane tunnel. The polypeptide is Potassium-transporting ATPase potassium-binding subunit (Salmonella typhi).